The sequence spans 111 residues: MAGFGLPNFGQLTEAFKKAQQIQQDAQKLQEELDAMEIEGSSVDGKASIWLSGNQQPLRVRLAPELLASGQEATEAATLEALQNAYAQSTATMKERMEELTGGLNLPGLGG.

This sequence belongs to the YbaB/EbfC family. In terms of assembly, homodimer.

It localises to the cytoplasm. The protein resides in the nucleoid. Binds to DNA and alters its conformation. May be involved in regulation of gene expression, nucleoid organization and DNA protection. The polypeptide is Nucleoid-associated protein SynRCC307_0025 (Synechococcus sp. (strain RCC307)).